A 548-amino-acid polypeptide reads, in one-letter code: Chaperonin GroEL 1 (548 aa).

ATP is bound by residues 30 to 33, Lys-51, 87 to 91, Gly-415, 479 to 481, and Asp-495; these read TLGP, DGTTT, and NAA.

It belongs to the chaperonin (HSP60) family. In terms of assembly, forms a cylinder of 14 subunits composed of two heptameric rings stacked back-to-back. Interacts with the co-chaperonin GroES.

The protein resides in the cytoplasm. The enzyme catalyses ATP + H2O + a folded polypeptide = ADP + phosphate + an unfolded polypeptide.. Functionally, together with its co-chaperonin GroES, plays an essential role in assisting protein folding. The GroEL-GroES system forms a nano-cage that allows encapsulation of the non-native substrate proteins and provides a physical environment optimized to promote and accelerate protein folding. This is Chaperonin GroEL 1 from Anaeromyxobacter dehalogenans (strain 2CP-C).